The sequence spans 137 residues: Protein cornichon homolog 3 (137 aa).

Transmembrane regions (helical) follow at residues 8-28 (IISF…LISL), 54-74 (ILQG…MALL), and 113-133 (LAYI…STLD).

Belongs to the cornichon family.

It is found in the membrane. The chain is Protein cornichon homolog 3 from Arabidopsis thaliana (Mouse-ear cress).